The sequence spans 206 residues: Potassium-transporting ATPase KdpC subunit (206 aa).

A helical transmembrane segment spans residues 14-34 (VLAVFTLFGLGLAYSLIATGI).

Belongs to the KdpC family. The system is composed of three essential subunits: KdpA, KdpB and KdpC.

The protein resides in the cell inner membrane. Functionally, part of the high-affinity ATP-driven potassium transport (or Kdp) system, which catalyzes the hydrolysis of ATP coupled with the electrogenic transport of potassium into the cytoplasm. This subunit acts as a catalytic chaperone that increases the ATP-binding affinity of the ATP-hydrolyzing subunit KdpB by the formation of a transient KdpB/KdpC/ATP ternary complex. This Xanthomonas axonopodis pv. citri (strain 306) protein is Potassium-transporting ATPase KdpC subunit.